A 638-amino-acid chain; its full sequence is Threonine--tRNA ligase (638 aa).

The 62-residue stretch at 1 to 62 folds into the TGS domain; sequence MYQLTLPDKS…EKNSNIEVLT (62 aa). Residues 246–537 are catalytic; that stretch reads DHRKIGKEMD…LIEHYEGKFP (292 aa). 3 residues coordinate Zn(2+): C337, H388, and H514.

Belongs to the class-II aminoacyl-tRNA synthetase family. Homodimer. Zn(2+) is required as a cofactor.

It is found in the cytoplasm. It catalyses the reaction tRNA(Thr) + L-threonine + ATP = L-threonyl-tRNA(Thr) + AMP + diphosphate + H(+). Functionally, catalyzes the attachment of threonine to tRNA(Thr) in a two-step reaction: L-threonine is first activated by ATP to form Thr-AMP and then transferred to the acceptor end of tRNA(Thr). Also edits incorrectly charged L-seryl-tRNA(Thr). The chain is Threonine--tRNA ligase from Leptospira interrogans serogroup Icterohaemorrhagiae serovar copenhageni (strain Fiocruz L1-130).